The chain runs to 135 residues: Nucleoside diphosphate kinase (135 aa).

ATP-binding residues include K11, F59, R87, T93, R104, and N114. Catalysis depends on H117, which acts as the Pros-phosphohistidine intermediate.

The protein belongs to the NDK family. In terms of assembly, homotetramer. Mg(2+) serves as cofactor.

The protein resides in the cytoplasm. It carries out the reaction a 2'-deoxyribonucleoside 5'-diphosphate + ATP = a 2'-deoxyribonucleoside 5'-triphosphate + ADP. The catalysed reaction is a ribonucleoside 5'-diphosphate + ATP = a ribonucleoside 5'-triphosphate + ADP. Its function is as follows. Major role in the synthesis of nucleoside triphosphates other than ATP. The ATP gamma phosphate is transferred to the NDP beta phosphate via a ping-pong mechanism, using a phosphorylated active-site intermediate. The polypeptide is Nucleoside diphosphate kinase (Marinomonas sp. (strain MWYL1)).